The following is a 195-amino-acid chain: Cysteine/O-acetylserine efflux protein (195 aa).

5 helical membrane passes run 47–67 (SLGF…LAVI), 70–90 (AAVH…AWKI), 105–125 (ISFW…LYGV), 142–162 (VVGV…CWAL), and 177–194 (QLNI…VRIF).

It belongs to the Rht family.

The protein localises to the cell inner membrane. It carries out the reaction O-acetyl-L-serine(in) = O-acetyl-L-serine(out). The catalysed reaction is L-cysteine(in) = L-cysteine(out). Its function is as follows. Exporter of O-acetylserine (OAS) and cysteine. This is Cysteine/O-acetylserine efflux protein (eamB) from Shigella boydii serotype 4 (strain Sb227).